A 443-amino-acid chain; its full sequence is NADH-quinone oxidoreductase subunit D 1 (443 aa).

This sequence belongs to the complex I 49 kDa subunit family. NDH-1 is composed of 14 different subunits. Subunits NuoB, C, D, E, F, and G constitute the peripheral sector of the complex.

Its subcellular location is the cell membrane. It catalyses the reaction a quinone + NADH + 5 H(+)(in) = a quinol + NAD(+) + 4 H(+)(out). In terms of biological role, NDH-1 shuttles electrons from NADH, via FMN and iron-sulfur (Fe-S) centers, to quinones in the respiratory chain. The immediate electron acceptor for the enzyme in this species is believed to be a menaquinone. Couples the redox reaction to proton translocation (for every two electrons transferred, four hydrogen ions are translocated across the cytoplasmic membrane), and thus conserves the redox energy in a proton gradient. In Streptomyces avermitilis (strain ATCC 31267 / DSM 46492 / JCM 5070 / NBRC 14893 / NCIMB 12804 / NRRL 8165 / MA-4680), this protein is NADH-quinone oxidoreductase subunit D 1.